The chain runs to 255 residues: Imidazole glycerol phosphate synthase subunit HisF (255 aa).

Active-site residues include D11 and D130.

The protein belongs to the HisA/HisF family. As to quaternary structure, heterodimer of HisH and HisF.

It is found in the cytoplasm. It catalyses the reaction 5-[(5-phospho-1-deoxy-D-ribulos-1-ylimino)methylamino]-1-(5-phospho-beta-D-ribosyl)imidazole-4-carboxamide + L-glutamine = D-erythro-1-(imidazol-4-yl)glycerol 3-phosphate + 5-amino-1-(5-phospho-beta-D-ribosyl)imidazole-4-carboxamide + L-glutamate + H(+). It functions in the pathway amino-acid biosynthesis; L-histidine biosynthesis; L-histidine from 5-phospho-alpha-D-ribose 1-diphosphate: step 5/9. IGPS catalyzes the conversion of PRFAR and glutamine to IGP, AICAR and glutamate. The HisF subunit catalyzes the cyclization activity that produces IGP and AICAR from PRFAR using the ammonia provided by the HisH subunit. In Synechococcus sp. (strain ATCC 27144 / PCC 6301 / SAUG 1402/1) (Anacystis nidulans), this protein is Imidazole glycerol phosphate synthase subunit HisF.